The following is a 1089-amino-acid chain: Platelet-derived growth factor receptor alpha (1089 aa).

The signal sequence occupies residues 1–24 (MGTSHQVFLVLSCLLTGPGLISCQ). 5 consecutive Ig-like C2-type domains span residues 25–113 (LLLP…SEIE), 117–201 (IYIY…FKTS), 202–306 (EFNV…KRVT), 319–410 (PTFG…FELS), and 414–517 (PASI…LKLV). The Extracellular segment spans residues 25-528 (LLLPSILPNE…PTLRSELTVA (504 aa)). N-linked (GlcNAc...) asparagine glycans are attached at residues asparagine 42, asparagine 76, asparagine 89, asparagine 103, and asparagine 179. A disulfide bridge links cysteine 49 with cysteine 100. 2 disulfides stabilise this stretch: cysteine 150–cysteine 189 and cysteine 235–cysteine 290. N-linked (GlcNAc...) asparagine glycans are attached at residues asparagine 353, asparagine 359, asparagine 458, asparagine 468, and asparagine 506. A disulfide bond links cysteine 435 and cysteine 501. Residues 529-549 (AAVLVLLVIVIVSLIVLVVIW) traverse the membrane as a helical segment. The Cytoplasmic segment spans residues 550–1089 (KQKPRYEIRW…SSDLVEDSFL (540 aa)). Residues tyrosine 572 and tyrosine 574 each carry the phosphotyrosine; by autocatalysis modification. Positions 593-954 (LVLGRILGSG…HLSEIVENLL (362 aa)) constitute a Protein kinase domain. ATP contacts are provided by residues 599 to 607 (LGSGAFGKV) and lysine 627. Phosphotyrosine; by autocatalysis occurs at positions 720, 731, 742, 754, 762, and 768. The active-site Proton acceptor is aspartate 818. Residues tyrosine 849, tyrosine 988, and tyrosine 1018 each carry the phosphotyrosine; by autocatalysis modification. Residues 1018 to 1089 (YIIPLPDIDP…SSDLVEDSFL (72 aa)) form a disordered region. Positions 1041-1059 (SSQTSEESAIETGSSSSTF) are enriched in polar residues. Over residues 1065-1089 (ETIEDIDMMDDIGIDSSDLVEDSFL) the composition is skewed to acidic residues.

It belongs to the protein kinase superfamily. Tyr protein kinase family. CSF-1/PDGF receptor subfamily. In terms of assembly, interacts with homodimeric PDGFA, PDGFB and PDGFC, and with heterodimers formed by PDGFA and PDGFB. Monomer in the absence of bound ligand. Interaction with dimeric PDGFA, PDGFB and/or PDGFC leads to receptor dimerization, where both PDGFRA homodimers and heterodimers with PDGFRB are observed. Interacts (tyrosine phosphorylated) with SHB (via SH2 domain). Interacts (tyrosine phosphorylated) with SHF (via SH2 domain). Interacts (tyrosine phosphorylated) with SRC (via SH2 domain). Interacts (tyrosine phosphorylated) with PIK3R1. Interacts (tyrosine phosphorylated) with PLCG1 (via SH2 domain). Interacts (tyrosine phosphorylated) with CRK, GRB2 and GRB7. Interacts with CD248; this interaction promotes PDGF receptor signaling pathway. Ubiquitinated, leading to its internalization and degradation. In terms of processing, autophosphorylated on tyrosine residues upon ligand binding. Autophosphorylation occurs in trans, i.e. one subunit of the dimeric receptor phosphorylates tyrosine residues on the other subunit. Phosphorylation at Tyr-731 and Tyr-742 is important for interaction with PIK3R1. Phosphorylation at Tyr-720 and Tyr-754 is important for interaction with PTPN11. Phosphorylation at Tyr-762 is important for interaction with CRK. Phosphorylation at Tyr-572 and Tyr-574 is important for interaction with SRC and SRC family members. Phosphorylation at Tyr-988 and Tyr-1018 is important for interaction with PLCG1. Focally expressed in cortical interstitial cells and highly expressed in the interstitium of the papillary region. Also expressed by adventitial cells in arterial vessels. Up-regulated in areas of renal fibrosis. In mice with unilateral ureteral obstruction, expression in cortical interstitial cells becomes prominent at day 4 which increases progressively until day 14.

The protein localises to the cell membrane. It is found in the cell projection. It localises to the cilium. Its subcellular location is the golgi apparatus. It catalyses the reaction L-tyrosyl-[protein] + ATP = O-phospho-L-tyrosyl-[protein] + ADP + H(+). Present in an inactive conformation in the absence of bound ligand. Binding of PDGFA and/or PDGFB leads to dimerization and activation by autophosphorylation on tyrosine residues. Inhibited by imatinib, nilotinib and sorafenib. Tyrosine-protein kinase that acts as a cell-surface receptor for PDGFA, PDGFB and PDGFC and plays an essential role in the regulation of embryonic development, cell proliferation, survival and chemotaxis. Depending on the context, promotes or inhibits cell proliferation and cell migration. Plays an important role in the differentiation of bone marrow-derived mesenchymal stem cells. Required for normal skeleton development and cephalic closure during embryonic development. Required for normal development of the mucosa lining the gastrointestinal tract, and for recruitment of mesenchymal cells and normal development of intestinal villi. Plays a role in cell migration and chemotaxis in wound healing. Plays a role in platelet activation, secretion of agonists from platelet granules, and in thrombin-induced platelet aggregation. Binding of its cognate ligands - homodimeric PDGFA, homodimeric PDGFB, heterodimers formed by PDGFA and PDGFB or homodimeric PDGFC -leads to the activation of several signaling cascades; the response depends on the nature of the bound ligand and is modulated by the formation of heterodimers between PDGFRA and PDGFRB. Phosphorylates PIK3R1, PLCG1, and PTPN11. Activation of PLCG1 leads to the production of the cellular signaling molecules diacylglycerol and inositol 1,4,5-trisphosphate, mobilization of cytosolic Ca(2+) and the activation of protein kinase C. Phosphorylates PIK3R1, the regulatory subunit of phosphatidylinositol 3-kinase, and thereby mediates activation of the AKT1 signaling pathway. Mediates activation of HRAS and of the MAP kinases MAPK1/ERK2 and/or MAPK3/ERK1. Promotes activation of STAT family members STAT1, STAT3 and STAT5A and/or STAT5B. Receptor signaling is down-regulated by protein phosphatases that dephosphorylate the receptor and its down-stream effectors, and by rapid internalization of the activated receptor. The sequence is that of Platelet-derived growth factor receptor alpha (Pdgfra) from Mus musculus (Mouse).